A 181-amino-acid polypeptide reads, in one-letter code: Caveolin-1 (181 aa).

At 1-107 the chain is on the cytoplasmic side; sequence MTGGLRDGEK…TKYWCYRLLT (107 aa). The segment at residues 108–128 is an intramembrane region (helical); sequence ALVGIPLALIWGIFFAILSFI. Topologically, residues 129–181 are cytoplasmic; that stretch reads HIWAVVPCVKSYLIEIHCISRVYSICVHTFCDPLFEAMGKCLGGVRIRTSKEV. 3 S-palmitoyl cysteine lipidation sites follow: cysteine 136, cysteine 146, and cysteine 159.

The protein belongs to the caveolin family. Homooligomer.

It is found in the golgi apparatus membrane. Its subcellular location is the cell membrane. It localises to the membrane. The protein localises to the caveola. The protein resides in the membrane raft. May act as a positive regulator of T-cell coactivation. May act as a scaffolding protein within caveolar membranes. Interacts directly with G-protein alpha subunits and can functionally regulate their activity. In Takifugu rubripes (Japanese pufferfish), this protein is Caveolin-1 (cav1).